The chain runs to 277 residues: Carbonyl reductase [NADPH] 1 (277 aa).

Serine 2 carries the post-translational modification N-acetylserine. Serine 2 and serine 30 each carry phosphoserine. NADP(+) is bound by residues 10 to 34, 63 to 64, and asparagine 90; these read VTGA…GDVV and DI. Residues 95–97 and glutamine 106 each bind glutathione; that span reads FKT. Substrate is bound at residue serine 140. 193-194 contacts glutathione; that stretch reads AY. Catalysis depends on tyrosine 194, which acts as the Proton acceptor. Residues 194–198 and 231–233 contribute to the NADP(+) site; these read YGVTK and VRT. Position 239 is an N6-1-carboxyethyl lysine (lysine 239).

The protein belongs to the short-chain dehydrogenases/reductases (SDR) family. As to quaternary structure, monomer.

Its subcellular location is the cytoplasm. It carries out the reaction a secondary alcohol + NADP(+) = a ketone + NADPH + H(+). The catalysed reaction is prostaglandin F2alpha + NADP(+) = prostaglandin E2 + NADPH + H(+). The enzyme catalyses prostaglandin E1 + NADP(+) = 15-oxoprostaglandin E1 + NADPH + H(+). It catalyses the reaction menadione + NADPH + H(+) = menadiol + NADP(+). It carries out the reaction prostaglandin D2 + NADP(+) = 15-oxoprostaglandin D2 + NADPH + H(+). The catalysed reaction is prostaglandin E2 + NADP(+) = 15-oxoprostaglandin E2 + NADPH + H(+). The enzyme catalyses prostaglandin F2alpha + NADP(+) = 15-oxoprostaglandin F2alpha + NADPH + H(+). It catalyses the reaction daunorubicin + NADPH + H(+) = 13-dihydrodaunorubicin + NADP(+). It carries out the reaction S-nitrosoglutathione + NADPH + H(+) = S-(hydroxysulfenamide)glutathione + NADP(+). The catalysed reaction is a primary alcohol + NADP(+) = an aldehyde + NADPH + H(+). The enzyme catalyses cortisol + NADPH + H(+) = 20beta-dihydrocortisol + NADP(+). It catalyses the reaction corticosterone + NADPH + H(+) = 20beta-dihydrocorticosterone + NADP(+). NADPH-dependent reductase with broad substrate specificity. Catalyzes the reduction of a wide variety of carbonyl compounds including quinones, prostaglandins, menadione, plus various xenobiotics. Catalyzes the reduction of the antitumor anthracyclines doxorubicin and daunorubicin to the cardiotoxic compounds doxorubicinol and daunorubicinol. Can convert prostaglandin E to prostaglandin F2-alpha. Can bind glutathione, which explains its higher affinity for glutathione-conjugated substrates. Catalyzes the reduction of S-nitrosoglutathione. In addition, participates in the glucocorticoid metabolism by catalyzing the NADPH-dependent cortisol/corticosterone into 20beta-dihydrocortisol (20b-DHF) or 20beta-corticosterone (20b-DHB), which are weak agonists of NR3C1 and NR3C2 in adipose tissue. This Bos taurus (Bovine) protein is Carbonyl reductase [NADPH] 1.